Here is a 184-residue protein sequence, read N- to C-terminus: Ethylene-responsive transcription factor ERF024 (184 aa).

The tract at residues 1–21 (MQGTSKDNGGRHPLYRGVRQR) is disordered. A DNA-binding region (AP2/ERF) is located at residues 14 to 72 (LYRGVRQRKNSNKWVSEIREPRKPNRIWLGTFSTPEMAAIAYDVAALALKGSQAELNFP).

This sequence belongs to the AP2/ERF transcription factor family. ERF subfamily.

It localises to the nucleus. Its function is as follows. Probably acts as a transcriptional activator. Binds to the GCC-box pathogenesis-related promoter element. May be involved in the regulation of gene expression by stress factors and by components of stress signal transduction pathways. In Arabidopsis thaliana (Mouse-ear cress), this protein is Ethylene-responsive transcription factor ERF024 (ERF024).